Consider the following 88-residue polypeptide: Cell division topological specificity factor (88 aa).

Belongs to the MinE family.

Its function is as follows. Prevents the cell division inhibition by proteins MinC and MinD at internal division sites while permitting inhibition at polar sites. This ensures cell division at the proper site by restricting the formation of a division septum at the midpoint of the long axis of the cell. This Aeromonas salmonicida (strain A449) protein is Cell division topological specificity factor.